The primary structure comprises 440 residues: Chromosome partition protein MukF (440 aa).

The leucine-zipper stretch occupies residues 208–236 (LDETSGNLRELQDTLNAAGDKLQSQLLRI).

It belongs to the MukF family. In terms of assembly, interacts, and probably forms a ternary complex, with MukE and MukB via its C-terminal region. The complex formation is stimulated by calcium or magnesium. It is required for an interaction between MukE and MukB.

It is found in the cytoplasm. Its subcellular location is the nucleoid. Involved in chromosome condensation, segregation and cell cycle progression. May participate in facilitating chromosome segregation by condensation DNA from both sides of a centrally located replisome during cell division. Not required for mini-F plasmid partitioning. Probably acts via its interaction with MukB and MukE. Overexpression results in anucleate cells. It has a calcium binding activity. The polypeptide is Chromosome partition protein MukF (Histophilus somni (strain 2336) (Haemophilus somnus)).